Reading from the N-terminus, the 264-residue chain is Small ribosomal subunit protein uS2 (264 aa).

The interval 228 to 264 is disordered; it reads VDTSATVDEEEAEVAEETESMESAEDLDADLIEEEAE. Residues 234–264 show a composition bias toward acidic residues; the sequence is VDEEEAEVAEETESMESAEDLDADLIEEEAE.

The protein belongs to the universal ribosomal protein uS2 family.

The chain is Small ribosomal subunit protein uS2 from Symbiobacterium thermophilum (strain DSM 24528 / JCM 14929 / IAM 14863 / T).